Reading from the N-terminus, the 223-residue chain is MVNVEAISLYGTPNIGVYIFANDRFALIPYDAPEKLDRKIAENLSVDAFRVSVAGTRLVGIFLAGNNNGLVVPRVILDSELEHLKSLLDVNIVVLEDVRETGIGNLVLANDNGCVASQILPKSAVDRIADALGVECIQMSIGDVPFVGSLSVATNRGVALPPLATEEEIKSVEEALKVKANVLTVNRGKMFLRTGLVANSKGALVGEDTTGHEMMQLQRIFFQ.

It belongs to the eIF-6 family.

Binds to the 50S ribosomal subunit and prevents its association with the 30S ribosomal subunit to form the 70S initiation complex. This is Translation initiation factor 6 from Thermofilum pendens (strain DSM 2475 / Hrk 5).